An 85-amino-acid chain; its full sequence is Putative sodium channel toxin Ts34 (85 aa).

An N-terminal signal peptide occupies residues 1–17 (MNLPLLLLITILIEIHA). The region spanning 19 to 82 (KDGYVIYKNS…IYGETGSYCW (64 aa)) is the LCN-type CS-alpha/beta domain. Disulfide bonds link C30/C81, C34/C57, C43/C62, and C47/C64.

This sequence belongs to the long (4 C-C) scorpion toxin superfamily. Sodium channel inhibitor family. As to expression, expressed by the venom gland.

It localises to the secreted. Putative sodium channel toxin. The polypeptide is Putative sodium channel toxin Ts34 (Tityus serrulatus (Brazilian scorpion)).